Reading from the N-terminus, the 251-residue chain is Probable transcriptional regulatory protein MRA_2631 (251 aa).

Belongs to the TACO1 family.

It localises to the cytoplasm. In Mycobacterium tuberculosis (strain ATCC 25177 / H37Ra), this protein is Probable transcriptional regulatory protein MRA_2631.